Here is a 370-residue protein sequence, read N- to C-terminus: Putative glutamate--cysteine ligase 2 (370 aa).

It belongs to the glutamate--cysteine ligase type 2 family. YbdK subfamily.

The enzyme catalyses L-cysteine + L-glutamate + ATP = gamma-L-glutamyl-L-cysteine + ADP + phosphate + H(+). Functionally, ATP-dependent carboxylate-amine ligase which exhibits weak glutamate--cysteine ligase activity. The protein is Putative glutamate--cysteine ligase 2 of Methylibium petroleiphilum (strain ATCC BAA-1232 / LMG 22953 / PM1).